Consider the following 314-residue polypeptide: Serine/threonine-protein phosphatase PP-Y (314 aa).

Asp60, His62, Asp88, and Asn120 together coordinate Mn(2+). The active-site Proton donor is His121. Residues His169 and His244 each contribute to the Mn(2+) site.

The protein belongs to the PPP phosphatase family. PP-Y subfamily. The cofactor is Mn(2+).

It catalyses the reaction O-phospho-L-seryl-[protein] + H2O = L-seryl-[protein] + phosphate. The enzyme catalyses O-phospho-L-threonyl-[protein] + H2O = L-threonyl-[protein] + phosphate. The protein is Serine/threonine-protein phosphatase PP-Y (PpY-55A) of Drosophila melanogaster (Fruit fly).